A 248-amino-acid polypeptide reads, in one-letter code: Ubiquinone/menaquinone biosynthesis C-methyltransferase UbiE (248 aa).

2 residues coordinate S-adenosyl-L-methionine: S68 and D92.

Belongs to the class I-like SAM-binding methyltransferase superfamily. MenG/UbiE family.

It carries out the reaction a 2-demethylmenaquinol + S-adenosyl-L-methionine = a menaquinol + S-adenosyl-L-homocysteine + H(+). The enzyme catalyses a 2-methoxy-6-(all-trans-polyprenyl)benzene-1,4-diol + S-adenosyl-L-methionine = a 5-methoxy-2-methyl-3-(all-trans-polyprenyl)benzene-1,4-diol + S-adenosyl-L-homocysteine + H(+). Its pathway is quinol/quinone metabolism; menaquinone biosynthesis; menaquinol from 1,4-dihydroxy-2-naphthoate: step 2/2. It participates in cofactor biosynthesis; ubiquinone biosynthesis. Functionally, methyltransferase required for the conversion of demethylmenaquinol (DMKH2) to menaquinol (MKH2) and the conversion of 2-polyprenyl-6-methoxy-1,4-benzoquinol (DDMQH2) to 2-polyprenyl-3-methyl-6-methoxy-1,4-benzoquinol (DMQH2). The chain is Ubiquinone/menaquinone biosynthesis C-methyltransferase UbiE from Rickettsia conorii (strain ATCC VR-613 / Malish 7).